The chain runs to 201 residues: Transmembrane 4 L6 family member 18 (201 aa).

Over M1–C9 the chain is Cytoplasmic. The helical transmembrane segment at L10–F30 threads the bilayer. Topologically, residues P31–Y49 are extracellular. The helical transmembrane segment at F50–L70 threads the bilayer. Residues E71–S93 lie on the Cytoplasmic side of the membrane. Residues M94–G114 traverse the membrane as a helical segment. Topologically, residues L115–W157 are extracellular. Residues N158 to I178 traverse the membrane as a helical segment. Residues R179–I201 are Cytoplasmic-facing.

It belongs to the L6 tetraspanin family.

It is found in the membrane. This chain is Transmembrane 4 L6 family member 18 (TM4SF18), found in Bos taurus (Bovine).